A 69-amino-acid polypeptide reads, in one-letter code: Ribosome modulation factor (69 aa).

It belongs to the ribosome modulation factor family.

The protein resides in the cytoplasm. In terms of biological role, during stationary phase, converts 70S ribosomes to an inactive dimeric form (100S ribosomes). The chain is Ribosome modulation factor from Hahella chejuensis (strain KCTC 2396).